We begin with the raw amino-acid sequence, 232 residues long: Probable metallo-hydrolase M6_Spy0554 (232 aa).

The Zn(2+) site is built by His-75, His-77, Asp-79, His-80, His-155, Asp-174, and His-215.

Zn(2+) serves as cofactor.

The protein is Probable metallo-hydrolase M6_Spy0554 of Streptococcus pyogenes serotype M6 (strain ATCC BAA-946 / MGAS10394).